The primary structure comprises 253 residues: Complement C1q subcomponent subunit B (253 aa).

The signal sequence occupies residues 1 to 25 (MKTQWSEILTPLLLLLLGLLHVSWA). Pyrrolidone carboxylic acid is present on Q26. The Collagen-like domain maps to 29-112 (CTGSPGIPGV…GPRGPKGGSG (84 aa)). The segment at 29–114 (CTGSPGIPGV…RGPKGGSGDY (86 aa)) is disordered. Residues P33, P36, P39, P51, and P54 each carry the 4-hydroxyproline modification. 2 positions are modified to 5-hydroxylysine: K57 and K60. A 4-hydroxyproline modification is found at P63. Residues 68 to 77 (DHGELGEKGD) are compositionally biased toward basic and acidic residues. K75 carries the 5-hydroxylysine modification. Residues 78–96 (AGIPGIPGKVGPKGPVGPK) are compositionally biased toward low complexity. 4-hydroxyproline is present on residues P81 and P84. 5-hydroxylysine occurs at positions 90 and 96. P99 and P102 each carry 4-hydroxyproline. K108 is modified (5-hydroxylysine). A C1q domain is found at 115 to 253 (KATQKVAFSA…GFLLFPDMDV (139 aa)). C179 and C198 are disulfide-bonded. D199, Y200, and Q206 together coordinate Ca(2+).

As to quaternary structure, core component of the complement C1 complex, a calcium-dependent complex composed of 1 molecule of the C1Q subcomplex, 2 molecules of C1R and 2 molecules of C1S. The C1Q subcomplex is composed 18 subunits: 3 chains of C1QA, C1QB, and C1QC trimerize to form 6 collagen-like triple helices connected to six globular ligand-recognition modules (C1q domain). In terms of processing, hydroxylated on lysine and proline residues. Hydroxylated lysine residues can be glycosylated. Human C1Q contains up to 68.3 hydroxylysine-galactosylglucose residues and up to 2.5 hydroxylysine-galactose per molecule. Total percentage hydroxylysine residues glycosylated is 86.4%. As to expression, highest levels in spleen, lung and brain. Weaker expression in kidney and liver. In the spleen, localized mainly to the red pulp, in cells mainly of monocyte-macrophage lineage. In white pulp, localized in specific dendritic cells such as those from the periarteriolar lymphatic sheath (PALS).

It localises to the secreted. Its subcellular location is the cell surface. The C1Q subcomplex is inhibited by sulfated molecules, such as triterpenoid sulfates, heparan sulfate, or chondroitin sulfates. Core component of the complement C1 complex, a multiprotein complex that initiates the classical pathway of the complement system, a cascade of proteins that leads to phagocytosis and breakdown of pathogens and signaling that strengthens the adaptive immune system. The classical complement pathway is initiated by the C1Q subcomplex of the C1 complex, which specifically binds IgG or IgM immunoglobulins complexed with antigens, forming antigen-antibody complexes on the surface of pathogens: C1QA, together with C1QB and C1QC, specifically recognizes and binds the Fc regions of IgG or IgM via its C1q domain. Immunoglobulin-binding activates the proenzyme C1R, which cleaves C1S, initiating the proteolytic cascade of the complement system. The C1Q subcomplex is activated by a hexamer of IgG complexed with antigens, while it is activated by a pentameric IgM. The C1Q subcomplex also recognizes and binds phosphatidylserine exposed on the surface of cells undergoing programmed cell death, possibly promoting activation of the complement system. This Rattus norvegicus (Rat) protein is Complement C1q subcomponent subunit B.